We begin with the raw amino-acid sequence, 973 residues long: Vacuolar protein sorting-associated protein 18 homolog (973 aa).

Ala2 carries the N-acetylalanine modification. Residues Ser3, Ser11, and Ser13 each carry the phosphoserine modification. Lys362 is subject to N6-acetyllysine. The stretch at 454–481 (EEIALKFLEARQEEALAEFLQRKLASLK) forms a coiled coil. A CHCR repeat occupies 618 to 772 (GSRLDARQLI…VVQEEEDVQT (155 aa)). The residue at position 689 (Ser689) is a Phosphoserine. The stretch at 802–848 (KEAICSSLKAYNHHIQELQREMEEATASAQRIRRDLQELRGRYGTVE) forms a coiled coil. The RING-type zinc finger occupies 853 to 947 (CATCDFPLLN…ELVAAECVYC (95 aa)). The disordered stretch occupies residues 903–929 (GAAPPPAKGSARAKEAEGGAATAGPSR). Ser912 is subject to Phosphoserine.

Belongs to the VPS18 family. In terms of assembly, core component of at least two putative endosomal tethering complexes, the homotypic fusion and vacuole protein sorting (HOPS) complex and the class C core vacuole/endosome tethering (CORVET) complex. Their common core is composed of the class C Vps proteins VPS11, VPS16, VPS18 and VPS33A, which in HOPS further associates with VPS39 and VPS41 and in CORVET with VPS8 and TGFBRAP1. Interacts with RAB5C. Interacts with HOOK1. Interacts with STX7, MON1B. Associates with adaptor protein complex 3 (AP-3) and clathrin:AP-3 complexes. Interacts with SYNPO2. Interacts with PLEKHM1. In terms of tissue distribution, ubiquitous. Expression was highest in heart and low in lung.

It localises to the late endosome membrane. The protein localises to the lysosome membrane. It is found in the early endosome. Its subcellular location is the cytoplasmic vesicle. The protein resides in the autophagosome. It localises to the clathrin-coated vesicle. Plays a role in vesicle-mediated protein trafficking to lysosomal compartments including the endocytic membrane transport and autophagic pathways. Believed to act as a core component of the putative HOPS and CORVET endosomal tethering complexes which are proposed to be involved in the Rab5-to-Rab7 endosome conversion probably implicating MON1A/B, and via binding SNAREs and SNARE complexes to mediate tethering and docking events during SNARE-mediated membrane fusion. The HOPS complex is proposed to be recruited to Rab7 on the late endosomal membrane and to regulate late endocytic, phagocytic and autophagic traffic towards lysosomes. The CORVET complex is proposed to function as a Rab5 effector to mediate early endosome fusion probably in specific endosome subpopulations. Required for fusion of endosomes and autophagosomes with lysosomes. Involved in dendrite development of Pukinje cells. The polypeptide is Vacuolar protein sorting-associated protein 18 homolog (Homo sapiens (Human)).